The chain runs to 1098 residues: Tudor domain-containing protein 7 (1098 aa).

HTH OST-type domains lie at 3 to 76 (EGDL…YAMA) and 233 to 302 (KMDE…YPAK). A Phosphoserine modification is found at S319. One can recognise an HTH OST-type 3 domain in the interval 337 to 406 (MAGDFKEKVA…PQKAILYAKL (70 aa)). Tudor domains lie at 513 to 570 (AVNV…FCSL) and 703 to 760 (LPFC…FLQE). S859 carries the post-translational modification Phosphoserine. Positions 861 to 1098 (NSKNGNMRVS…EYLIELSKVN (238 aa)) are interaction with CDK17. Positions 893 to 1098 (TSSFSTEELP…EYLIELSKVN (206 aa)) are interaction with CABLES1.

Belongs to the TDRD7 family. In terms of assembly, found in a mRNP complex, at least composed of TDRD1, TDRD6, TDRD7 and DDX4. Found in a complex containing CABLES1, CDK16 and CDK17. Interacts with CABLES1, CDK17 and PIWIL1.

It localises to the cytoplasm. Component of specific cytoplasmic RNA granules involved in post-transcriptional regulation of specific genes: probably acts by binding to specific mRNAs and regulating their translation. Required for lens transparency during lens development, by regulating translation of genes such as CRYBB3 and HSPB1 in the developing lens. Also required during spermatogenesis. This is Tudor domain-containing protein 7 (TDRD7) from Pongo abelii (Sumatran orangutan).